The sequence spans 203 residues: Urease accessory protein UreG (203 aa).

GTP is bound at residue Gly10 to Thr17.

The protein belongs to the SIMIBI class G3E GTPase family. UreG subfamily. As to quaternary structure, homodimer. UreD, UreF and UreG form a complex that acts as a GTP-hydrolysis-dependent molecular chaperone, activating the urease apoprotein by helping to assemble the nickel containing metallocenter of UreC. The UreE protein probably delivers the nickel.

Its subcellular location is the cytoplasm. In terms of biological role, facilitates the functional incorporation of the urease nickel metallocenter. This process requires GTP hydrolysis, probably effectuated by UreG. The sequence is that of Urease accessory protein UreG from Kocuria rhizophila (strain ATCC 9341 / DSM 348 / NBRC 103217 / DC2201).